The chain runs to 508 residues: UBX domain-containing protein 4 (508 aa).

Residues 1–200 (MLWFQGAIPA…PAEDLNIRVE (200 aa)) are interaction with UBQLN1. Residues 1–413 (MLWFQGAIPA…VHSSSGDIWT (413 aa)) are Cytoplasmic-facing. Polar residues-rich tracts occupy residues 117-151 (SETSVANGSQSESSVSTPSASFEPNNTCENSQSRN) and 160-187 (TSDTKSDTATGGESAGHATSSQEPSGCS). The tract at residues 117 to 196 (SETSVANGSQ…SDQRPAEDLN (80 aa)) is disordered. The 79-residue stretch at 315–393 (ERSTVARIQF…ELAPSASVVL (79 aa)) folds into the UBX domain. An intramembrane segment occupies 414–434 (LLGTVLYPFLAIWRLISNFLF). At 435-508 (SNPPPTQTSV…TWNGNSTQQM (74 aa)) the chain is on the cytoplasmic side. Residues 440–508 (TQTSVRVTSS…TWNGNSTQQM (69 aa)) are disordered. Residues 441 to 458 (QTSVRVTSSEPPNPASSS) are compositionally biased toward polar residues. Residues 459–491 (KSEKREPVRKRVLEKRGDDFKKEGKIYRLRTQD) are compositionally biased toward basic and acidic residues. A Phosphothreonine modification is found at Thr-489. Over residues 498–508 (NTWNGNSTQQM) the composition is skewed to polar residues.

In terms of assembly, directly interacts with VCP. Interacts with UBQLN1. Forms a complex with VCP and UBQLN1. As to expression, expressed in many tissues, including heart, brain, placenta, lung, liver, skeletal muscle, kidney and pancreas. Accumulates in Alzheimer disease-afflicted brains (at protein level).

It localises to the endoplasmic reticulum membrane. The protein localises to the nucleus envelope. In terms of biological role, involved in endoplasmic reticulum-associated protein degradation (ERAD). Acts as a platform to recruit both UBQLN1 and VCP to the ER during ERAD. The protein is UBX domain-containing protein 4 (UBXN4) of Homo sapiens (Human).